We begin with the raw amino-acid sequence, 483 residues long: Serine hydroxymethyltransferase, cytosolic (483 aa).

At lysine 257 the chain carries N6-(pyridoxal phosphate)lysine.

The protein belongs to the SHMT family. As to quaternary structure, homotetramer. Identified in complex with ABRAXAS2 and the other subunits of the BRISC complex, at least composed of ABRAXAS2, BRCC3/BRCC36, BABAM2 and BABAM1/NBA1. Pyridoxal 5'-phosphate is required as a cofactor.

Its subcellular location is the cytoplasm. It carries out the reaction (6R)-5,10-methylene-5,6,7,8-tetrahydrofolate + glycine + H2O = (6S)-5,6,7,8-tetrahydrofolate + L-serine. The protein operates within one-carbon metabolism; tetrahydrofolate interconversion. Functionally, interconversion of serine and glycine. The polypeptide is Serine hydroxymethyltransferase, cytosolic (SHMT1) (Pongo abelii (Sumatran orangutan)).